The primary structure comprises 138 residues: Phospholipase A2 crotoxin basic chain CBa2 (138 aa).

An N-terminal signal peptide occupies residues 1 to 16; sequence MRALWIVAVLLVGVEG. 7 cysteine pairs are disulfide-bonded: Cys-42–Cys-131, Cys-44–Cys-60, Cys-59–Cys-111, Cys-65–Cys-138, Cys-66–Cys-104, Cys-73–Cys-97, and Cys-91–Cys-102. 3 residues coordinate Ca(2+): Tyr-43, Gly-45, and Gly-47. The active site involves His-63. Residue Asp-64 coordinates Ca(2+). Residue Asp-105 is part of the active site.

This sequence belongs to the phospholipase A2 family. Group II subfamily. D49 sub-subfamily. In terms of assembly, heterodimer of one of the acidic (CA1, CA2, CA3 or CA4) and one of the basic (CBa1, CBa2, CBb, CBc or CBd) subunits; non-covalently linked. The acidic subunit is non-toxic, without enzymatic activity and comprises 3 peptides that are cross-linked by 5 disulfide bridges. The basic subunit is toxic, has phospholipase A2 activity and is composed of a single chain. Multiple variants of each subunit give different crotoxin complexes that can be subdivided into 2 classes: (1) those of high toxicity, low PLA2 activity (CBb, CBc and CBd linked with high affinity to any CA) and high stability (K(d)=4.5 nM) and (2) those of moderate toxicity, high PLA2 activity (CBa2 linked with low affinity to any CA) and low stability (K(d)=25 nM). Interacts with human NBD1 domain of CFTR. The cofactor is Ca(2+). In terms of tissue distribution, expressed by the venom gland.

Its subcellular location is the secreted. It catalyses the reaction a 1,2-diacyl-sn-glycero-3-phosphocholine + H2O = a 1-acyl-sn-glycero-3-phosphocholine + a fatty acid + H(+). Heterodimer CA-CB: Crotoxin is a potent presynaptic neurotoxin that possesses phospholipase A2 (PLA2) activity and exerts a lethal action by blocking neuromuscular transmission. It consists of a non-covalent association of a basic and weakly toxic PLA2 subunit (CBa2, CBb, CBc, or CBd), with a small acidic, non-enzymatic and non-toxic subunit (CA1, CA2, CA3 or CA4). The complex acts by binding to a specific 48-kDa protein (R48) receptor located on presynaptic membranes, forming a transient ternary complex CA-CB-R48, followed by dissociation of the CA-CB complex and release of the CA subunit. At equilibrium, only the CB subunits remain associated with the specific crotoxin receptor. In addition to neurotoxicity, crotoxin has been found to exert myotoxicity, nephrotoxicity, and cardiovascular toxicity. Moreover, anti-inflammatory, immunomodulatory, anti-tumor and analgesic effects of crotoxin have also been reported. Its function is as follows. Monomer CBa2: The basic subunit of crotoxin is a snake venom phospholipase A2 (PLA2) that exhibits weak neurotoxicity (10-fold less than the heterodimer) and strong anticoagulant effects by binding to factor Xa (F10) and inhibiting the prothrombinase activity (IC(50) is 41 nM). In addition, it shows the same effects described for the heterodimer and binds the nucleotide-binding domain (NBD1) of CFTR chloride channels and increases the channel current. PLA2 catalyzes the calcium-dependent hydrolysis of the 2-acyl groups in 3-sn-phosphoglycerides. This is Phospholipase A2 crotoxin basic chain CBa2 from Crotalus durissus terrificus (South American rattlesnake).